The primary structure comprises 307 residues: Oxygen-dependent coproporphyrinogen-III oxidase (307 aa).

Position 99 (S99) interacts with substrate. A divalent metal cation is bound by residues H103 and H113. The Proton donor role is filled by H113. 115-117 (NVR) contributes to the substrate binding site. A divalent metal cation is bound by residues H152 and H182. An important for dimerization region spans residues 247–282 (YVEFNLVFDRGTLFGLQSGGRTESILMSMPPVANWR). 265–267 (GGR) lines the substrate pocket.

Belongs to the aerobic coproporphyrinogen-III oxidase family. As to quaternary structure, homodimer. A divalent metal cation is required as a cofactor.

Its subcellular location is the cytoplasm. The enzyme catalyses coproporphyrinogen III + O2 + 2 H(+) = protoporphyrinogen IX + 2 CO2 + 2 H2O. It participates in porphyrin-containing compound metabolism; protoporphyrin-IX biosynthesis; protoporphyrinogen-IX from coproporphyrinogen-III (O2 route): step 1/1. Functionally, involved in the heme biosynthesis. Catalyzes the aerobic oxidative decarboxylation of propionate groups of rings A and B of coproporphyrinogen-III to yield the vinyl groups in protoporphyrinogen-IX. This chain is Oxygen-dependent coproporphyrinogen-III oxidase, found in Burkholderia cenocepacia (strain ATCC BAA-245 / DSM 16553 / LMG 16656 / NCTC 13227 / J2315 / CF5610) (Burkholderia cepacia (strain J2315)).